The primary structure comprises 539 residues: Acid-sensing ion channel 4 (539 aa).

At 1–68 the chain is on the cytoplasmic side; that stretch reads MPIEIVCKIK…GPGPHGLRRT (68 aa). The chain crosses the membrane as a helical span at residues 69 to 89; it reads LWALALLTSLAAFLYQAASLA. Topologically, residues 90–438 are extracellular; sequence RGYLTRPHLV…EQQAAYGLSA (349 aa). Cystine bridges form between Cys-118–Cys-202 and Cys-180–Cys-187. 4 N-linked (GlcNAc...) asparagine glycosylation sites follow: Asn-191, Asn-243, Asn-341, and Asn-376. 5 disulfides stabilise this stretch: Cys-296-Cys-375, Cys-318-Cys-371, Cys-322-Cys-369, Cys-331-Cys-353, and Cys-333-Cys-345. The chain crosses the membrane as a helical span at residues 439–459; the sequence is LLGDLGGQMGLFIGASILTLL. The GAS motif; ion selectivity filter signature appears at 452–454; sequence GAS. Residues 460-539 lie on the Cytoplasmic side of the membrane; it reads EILDYIYEVS…PGSLFEDFAC (80 aa). Residues 500 to 531 are disordered; sequence KEQSPCPSRGRAEGGGASSLLPNHHHPHGPPG.

The protein belongs to the amiloride-sensitive sodium channel (TC 1.A.6) family. ASIC4 subfamily. Homotrimer. Heterotrimer; with other ASIC proteins producing functional channels.

It is found in the cell membrane. Its function is as follows. Does not exhibit measurable stand-alone pH-gated sodium channel activity but may form pH-gated heterotrimeric sodium channels. Its activity could also depend on alternative gating mechanisms. In Mus musculus (Mouse), this protein is Acid-sensing ion channel 4.